The primary structure comprises 378 residues: Erythronate-4-phosphate dehydrogenase (378 aa).

Substrate-binding residues include serine 45 and threonine 66. The NAD(+) site is built by aspartate 146 and threonine 175. The active site involves arginine 208. Aspartate 232 contacts NAD(+). Glutamate 237 is a catalytic residue. The active-site Proton donor is the histidine 254. Glycine 257 provides a ligand contact to NAD(+). Tyrosine 258 lines the substrate pocket.

Belongs to the D-isomer specific 2-hydroxyacid dehydrogenase family. PdxB subfamily. Homodimer.

The protein resides in the cytoplasm. The enzyme catalyses 4-phospho-D-erythronate + NAD(+) = (R)-3-hydroxy-2-oxo-4-phosphooxybutanoate + NADH + H(+). It participates in cofactor biosynthesis; pyridoxine 5'-phosphate biosynthesis; pyridoxine 5'-phosphate from D-erythrose 4-phosphate: step 2/5. Catalyzes the oxidation of erythronate-4-phosphate to 3-hydroxy-2-oxo-4-phosphonooxybutanoate. This is Erythronate-4-phosphate dehydrogenase from Salmonella arizonae (strain ATCC BAA-731 / CDC346-86 / RSK2980).